The sequence spans 443 residues: Xaa-Pro dipeptidase (443 aa).

The Mn(2+) site is built by D246, D257, H339, E384, and E423.

It belongs to the peptidase M24B family. Bacterial-type prolidase subfamily. It depends on Mn(2+) as a cofactor.

It catalyses the reaction Xaa-L-Pro dipeptide + H2O = an L-alpha-amino acid + L-proline. Functionally, splits dipeptides with a prolyl residue in the C-terminal position. This Yersinia pestis bv. Antiqua (strain Nepal516) protein is Xaa-Pro dipeptidase.